The following is a 452-amino-acid chain: UDP-N-acetylmuramate--L-alanine ligase (452 aa).

121-127 (GTHGKTT) lines the ATP pocket.

It belongs to the MurCDEF family.

The protein localises to the cytoplasm. It carries out the reaction UDP-N-acetyl-alpha-D-muramate + L-alanine + ATP = UDP-N-acetyl-alpha-D-muramoyl-L-alanine + ADP + phosphate + H(+). The protein operates within cell wall biogenesis; peptidoglycan biosynthesis. Its function is as follows. Cell wall formation. In Christiangramia forsetii (strain DSM 17595 / CGMCC 1.15422 / KT0803) (Gramella forsetii), this protein is UDP-N-acetylmuramate--L-alanine ligase.